We begin with the raw amino-acid sequence, 651 residues long: Peptide-N(4)-(N-acetyl-beta-glucosaminyl)asparagine amidase (651 aa).

One can recognise a PUB domain in the interval 29–90 (EASRLLLTYA…EGETHMVFPK (62 aa)). Residues C246, C249, C279, and C282 each contribute to the Zn(2+) site. C305 acts as the Nucleophile in catalysis. Catalysis depends on residues H332 and D349. The PAW domain maps to 450–651 (EFGGRTSGSM…LEMIIKLADL (202 aa)).

This sequence belongs to the transglutaminase-like superfamily. PNGase family. Zn(2+) serves as cofactor.

The protein resides in the cytoplasm. The catalysed reaction is Hydrolysis of an N(4)-(acetyl-beta-D-glucosaminyl)asparagine residue in which the glucosamine residue may be further glycosylated, to yield a (substituted) N-acetyl-beta-D-glucosaminylamine and a peptide containing an aspartate residue.. Functionally, specifically deglycosylates the denatured form of N-linked glycoproteins in the cytoplasm and assists their proteasome-mediated degradation. Cleaves the beta-aspartyl-glucosamine (GlcNAc) of the glycan and the amide side chain of Asn, converting Asn to Asp. Prefers proteins containing high-mannose over those bearing complex type oligosaccharides. Can recognize misfolded proteins in the endoplasmic reticulum that are exported to the cytosol to be destroyed and deglycosylate them, while it has no activity toward native proteins. Deglycosylation is a prerequisite for subsequent proteasome-mediated degradation of some, but not all, misfolded glycoproteins. The protein is Peptide-N(4)-(N-acetyl-beta-glucosaminyl)asparagine amidase (NGLY1) of Gallus gallus (Chicken).